The following is a 164-amino-acid chain: Disulfide bond formation protein B (164 aa).

Residues methionine 1–cysteine 9 are Cytoplasmic-facing. Residues phenylalanine 10–tyrosine 26 form a helical membrane-spanning segment. The Periplasmic portion of the chain corresponds to phenylalanine 27–isoleucine 44. Cysteine 36 and cysteine 39 are oxidised to a cystine. A helical membrane pass occupies residues methionine 45 to proline 61. At alanine 62–alanine 68 the chain is on the cytoplasmic side. A helical membrane pass occupies residues tyrosine 69–glycine 85. Over arginine 86–alanine 142 the chain is Periplasmic. Cysteine 101 and cysteine 128 form a disulfide bridge. Residues tryptophan 143–asparagine 161 form a helical membrane-spanning segment. The Cytoplasmic segment spans residues alanine 162–arginine 164.

It belongs to the DsbB family.

It localises to the cell inner membrane. In terms of biological role, required for disulfide bond formation in some periplasmic proteins. Acts by oxidizing the DsbA protein. The protein is Disulfide bond formation protein B of Methylococcus capsulatus (strain ATCC 33009 / NCIMB 11132 / Bath).